A 303-amino-acid polypeptide reads, in one-letter code: Caspase-7 (303 aa).

A compositionally biased stretch (acidic residues) spans 1-21; sequence MADDQGCIEEQGVEDSANEDS. A disordered region spans residues 1 to 30; sequence MADDQGCIEEQGVEDSANEDSVDAKPDRSS. Ala-2 bears the N-acetylalanine mark. A propeptide spans 2 to 23 (N-terminally processed); that stretch reads ADDQGCIEEQGVEDSANEDSVD. Ser-30 is subject to Phosphoserine; by PAK2. Ser-37 bears the Phosphoserine mark. Residues 38-41 are exosite; it reads KKKK. A loop L1 region spans residues 76–87; sequence KNFDKVTGMGVR. The active site involves His-144. Thr-173 bears the Phosphothreonine; by PAK2 mark. Cys-186 is an active-site residue. Residues 187–196 are loop L2; that stretch reads RGTELDDGIQ. Residues 199-206 constitute a propeptide that is removed on maturation; that stretch reads SGPINDTD. Residues 226 to 238 form a loop L3 region; that stretch reads VPGYYSWRSPGRG. (Microbial infection) ADP-riboxanated arginine is present on Arg-233. A Phosphoserine; by PAK2 modification is found at Ser-239. A loop L4 region spans residues 274–288; it reads ESQSDDPHFHEKKQI.

It belongs to the peptidase C14A family. In terms of assembly, heterotetramer that consists of two anti-parallel arranged heterodimers, each one formed by a 20 kDa (p20) and a 11 kDa (p11) subunit. Interacts with XIAP (via its second BIR domain); inhibiting CASP7 activity. Interacts with BIRC6/bruce. Interacts with ATXN3 (short isoform 1). Interacts with HSPA5. Post-translationally, cleavage by different proteases, such as granzyme B (GZMB), caspase-1 (CASP1), caspase-8 (CASP8), caspase-9 (CASP9) or caspase-10 (CASP10) generate the two active subunits. Its involvement in different programmed cell death processes is probably specified by the protease that activates CASP7. Cleaved and activated by initiator caspases (CASP8, CASP9 and/or CASP10), leading to execution phase of apoptosis. Cleavage and maturation by GZMB regulates granzyme-mediated programmed cell death. Cleaved and activated by CASP1 in response to bacterial infection. Propeptide domains can also be cleaved efficiently by CASP3. Active heterodimers between the small subunit of caspase-7 and the large subunit of CASP3, and vice versa, also occur. Also cleaved at the N-terminus at alternative sites by CAPN1, leading to its activation. Phosphorylation at Ser-30 and Ser-239 by PAK2 inhibits its activity. Phosphorylation at Ser-30 prevents cleavage and activation by initiator caspase CASP9, while phosphorylation at Ser-239 prevents thiol protease activity by preventing substrate-binding. In terms of processing, (Microbial infection) ADP-riboxanation by C.violaceum CopC blocks CASP7 processing, preventing CASP7 activation and ability to recognize and cleave substrates. Post-translationally, ubiquitinated by BIRC6; this activity is inhibited by DIABLO/SMAC. In terms of tissue distribution, highly expressed in lung, skeletal muscle, liver, kidney, spleen and heart, and moderately in testis. No expression in the brain.

It is found in the cytoplasm. The protein localises to the cytosol. Its subcellular location is the nucleus. The protein resides in the secreted. It localises to the extracellular space. The enzyme catalyses Strict requirement for an Asp residue at position P1 and has a preferred cleavage sequence of Asp-Glu-Val-Asp-|-.. With respect to regulation, during activation, the N-terminal disordered prodomain is removed by cleavage. Concomitantly, double cleavage gives rise to a large Caspase-7 subunit p20 and a small Caspase-7 subunit p11. The two large and two small subunits then assemble to form the active CASP7 complex. Can be cleaved and activated by different caspases, depending on the context. Cleaved and activated by initiator caspases (CASP8, CASP9 and/or CASP10), leading to execution phase of apoptosis. Inhibited by XIAP, which directly binds to the active site pocket and obstructs substrate entry. Cleavage and maturation by GZMB regulates granzyme-mediated programmed cell death. Cleavage and maturation by CASP1 regulates pyroptosis. Phosphorylation at Ser-30 and Ser-239 by PAK2 inhibits its activity. Inhibited by isatin sulfonamides. Inhibited by 2-(2,4-Dichlorophenoxy)- N-(2-mercapto-ethyl)-acetamide (DICA) and 5-Fluoro-1H-indole-2- carboxylic acid (2-mercapto-ethyl)-amide (FICA) allosteric inhibitors, which disrupt an interaction between Arg-187 and Tyr-223. Specifically inhibited by DARPin D7.18 and D7.43, which specifically bind to the precursor CASP7 and prevent its processing and activation. Inhibited by BIRC6; following inhibition of BIRC6-caspase binding by DIABLO/SMAC, BIRC6 is subjected to caspase cleavage, leading to an increase in active caspases. Its function is as follows. Thiol protease involved in different programmed cell death processes, such as apoptosis, pyroptosis or granzyme-mediated programmed cell death, by proteolytically cleaving target proteins. Has a marked preference for Asp-Glu-Val-Asp (DEVD) consensus sequences, with some plasticity for alternate non-canonical sequences. Its involvement in the different programmed cell death processes is probably determined by upstream proteases that activate CASP7. Acts as an effector caspase involved in the execution phase of apoptosis: following cleavage and activation by initiator caspases (CASP8, CASP9 and/or CASP10), mediates execution of apoptosis by catalyzing cleavage of proteins, such as CLSPN, PARP1, PTGES3 and YY1. Compared to CASP3, acts as a minor executioner caspase and cleaves a limited set of target proteins. Acts as a key regulator of the inflammatory response in response to bacterial infection by catalyzing cleavage and activation of the sphingomyelin phosphodiesterase SMPD1 in the extracellular milieu, thereby promoting membrane repair. Regulates pyroptosis in intestinal epithelial cells: cleaved and activated by CASP1 in response to S.typhimurium infection, promoting its secretion to the extracellular milieu, where it catalyzes activation of SMPD1, generating ceramides that repair membranes and counteract the action of gasdermin-D (GSDMD) pores. Regulates granzyme-mediated programmed cell death in hepatocytes: cleaved and activated by granzyme B (GZMB) in response to bacterial infection, promoting its secretion to the extracellular milieu, where it catalyzes activation of SMPD1, generating ceramides that repair membranes and counteract the action of perforin (PRF1) pores. Following cleavage by CASP1 in response to inflammasome activation, catalyzes processing and inactivation of PARP1, alleviating the transcription repressor activity of PARP1. Acts as an inhibitor of type I interferon production during virus-induced apoptosis by mediating cleavage of antiviral proteins CGAS, IRF3 and MAVS, thereby preventing cytokine overproduction. Cleaves and activates sterol regulatory element binding proteins (SREBPs). Cleaves phospholipid scramblase proteins XKR4, XKR8 and XKR9. In case of infection, catalyzes cleavage of Kaposi sarcoma-associated herpesvirus protein ORF57, thereby preventing expression of viral lytic genes. Cleaves BIRC6 following inhibition of BIRC6-caspase binding by DIABLO/SMAC. Lacks enzymatic activity. This chain is Caspase-7, found in Homo sapiens (Human).